Consider the following 304-residue polypeptide: Glycine--tRNA ligase alpha subunit (304 aa).

It belongs to the class-II aminoacyl-tRNA synthetase family. In terms of assembly, tetramer of two alpha and two beta subunits.

The protein resides in the cytoplasm. The catalysed reaction is tRNA(Gly) + glycine + ATP = glycyl-tRNA(Gly) + AMP + diphosphate. The polypeptide is Glycine--tRNA ligase alpha subunit (Pectobacterium carotovorum subsp. carotovorum (strain PC1)).